The following is a 263-amino-acid chain: Indole-3-glycerol phosphate synthase (263 aa).

The protein belongs to the TrpC family.

It carries out the reaction 1-(2-carboxyphenylamino)-1-deoxy-D-ribulose 5-phosphate + H(+) = (1S,2R)-1-C-(indol-3-yl)glycerol 3-phosphate + CO2 + H2O. The protein operates within amino-acid biosynthesis; L-tryptophan biosynthesis; L-tryptophan from chorismate: step 4/5. This is Indole-3-glycerol phosphate synthase from Laribacter hongkongensis (strain HLHK9).